The sequence spans 88 residues: Small ribosomal subunit protein bS16c (88 aa).

It belongs to the bacterial ribosomal protein bS16 family.

The protein localises to the plastid. The protein resides in the chloroplast. This Calycanthus floridus var. glaucus (Eastern sweetshrub) protein is Small ribosomal subunit protein bS16c.